The primary structure comprises 395 residues: S-adenosylmethionine synthase (395 aa).

Residue H16 coordinates ATP. D18 provides a ligand contact to Mg(2+). A K(+)-binding site is contributed by E44. 2 residues coordinate L-methionine: E57 and Q100. The flexible loop stretch occupies residues 100–110 (QSPDIAQGVDR). ATP-binding positions include 167-169 (DAK), 233-234 (RF), D242, 248-249 (RK), A265, and K269. L-methionine is bound at residue D242. Residue K273 coordinates L-methionine.

This sequence belongs to the AdoMet synthase family. In terms of assembly, homotetramer; dimer of dimers. The cofactor is Mg(2+). K(+) serves as cofactor.

It is found in the cytoplasm. The enzyme catalyses L-methionine + ATP + H2O = S-adenosyl-L-methionine + phosphate + diphosphate. Its pathway is amino-acid biosynthesis; S-adenosyl-L-methionine biosynthesis; S-adenosyl-L-methionine from L-methionine: step 1/1. In terms of biological role, catalyzes the formation of S-adenosylmethionine (AdoMet) from methionine and ATP. The overall synthetic reaction is composed of two sequential steps, AdoMet formation and the subsequent tripolyphosphate hydrolysis which occurs prior to release of AdoMet from the enzyme. The chain is S-adenosylmethionine synthase from Burkholderia cenocepacia (strain HI2424).